Consider the following 245-residue polypeptide: Ribosomal protein L11 methyltransferase (245 aa).

Thr-101, Gly-122, Asp-144, and Asn-184 together coordinate S-adenosyl-L-methionine.

The protein belongs to the methyltransferase superfamily. PrmA family.

Its subcellular location is the cytoplasm. The enzyme catalyses L-lysyl-[protein] + 3 S-adenosyl-L-methionine = N(6),N(6),N(6)-trimethyl-L-lysyl-[protein] + 3 S-adenosyl-L-homocysteine + 3 H(+). Functionally, methylates ribosomal protein L11. This Aquifex aeolicus (strain VF5) protein is Ribosomal protein L11 methyltransferase.